A 477-amino-acid chain; its full sequence is Glycogen synthase (477 aa).

Lysine 15 lines the ADP-alpha-D-glucose pocket.

Belongs to the glycosyltransferase 1 family. Bacterial/plant glycogen synthase subfamily.

It carries out the reaction [(1-&gt;4)-alpha-D-glucosyl](n) + ADP-alpha-D-glucose = [(1-&gt;4)-alpha-D-glucosyl](n+1) + ADP + H(+). The protein operates within glycan biosynthesis; glycogen biosynthesis. Synthesizes alpha-1,4-glucan chains using ADP-glucose. This chain is Glycogen synthase, found in Glaesserella parasuis serovar 5 (strain SH0165) (Haemophilus parasuis).